The following is a 209-amino-acid chain: NAD-reducing hydrogenase HoxS subunit delta (209 aa).

As to quaternary structure, tetramer of an alpha and a gamma subunits (flavin-containing dimer), and a delta and a nickel-containing beta subunits (hydrogenase dimer). Requires [4Fe-4S] cluster as cofactor. [3Fe-4S] cluster serves as cofactor. It depends on [2Fe-2S] cluster as a cofactor. The cofactor is FMN. Ni(2+) is required as a cofactor.

It localises to the cytoplasm. It carries out the reaction H2 + NAD(+) = NADH + H(+). In Cupriavidus necator (strain ATCC 17699 / DSM 428 / KCTC 22496 / NCIMB 10442 / H16 / Stanier 337) (Ralstonia eutropha), this protein is NAD-reducing hydrogenase HoxS subunit delta (hoxY).